The sequence spans 164 residues: Interferon gamma (164 aa).

An N-terminal signal peptide occupies residues 1 to 19 (MTCQTYCLFVLSVIMIYFG). 3 N-linked (GlcNAc...) asparagine glycosylation sites follow: asparagine 42, asparagine 61, and asparagine 95.

This sequence belongs to the type II (or gamma) interferon family. In terms of assembly, homodimer.

The protein resides in the secreted. Its function is as follows. Produced by lymphocytes activated by specific antigens or mitogens. IFN-gamma, in addition to having antiviral activity, has important immunoregulatory functions. It is a potent activator of macrophages, it has antiproliferative effects on transformed cells and it can potentiate the antiviral and antitumor effects of the type I interferons. The polypeptide is Interferon gamma (IFNG) (Anas platyrhynchos (Mallard)).